A 579-amino-acid polypeptide reads, in one-letter code: uncharacterized protein (579 aa).

Transmembrane regions (helical) follow at residues 13-35 (DLIK…IPWI), 39-61 (SISR…LLLN), 66-83 (ANGL…AFYF), 93-110 (AYWG…TYPL), 130-152 (LAIV…IEYL), 162-181 (IVPK…FFLI), 201-223 (LIVN…LYLA), 238-257 (YIIM…RLLL), 264-286 (GFYR…GIHT), 296-315 (IRVM…LFSM), and 324-346 (LFSL…YYLA).

It is found in the cell membrane. This is an uncharacterized protein from Pasteurella multocida (strain Pm70).